We begin with the raw amino-acid sequence, 422 residues long: Glutamate-1-semialdehyde 2,1-aminomutase (422 aa).

N6-(pyridoxal phosphate)lysine is present on Lys258.

Belongs to the class-III pyridoxal-phosphate-dependent aminotransferase family. HemL subfamily. Homodimer. Pyridoxal 5'-phosphate serves as cofactor.

It localises to the cytoplasm. The catalysed reaction is (S)-4-amino-5-oxopentanoate = 5-aminolevulinate. Its pathway is porphyrin-containing compound metabolism; protoporphyrin-IX biosynthesis; 5-aminolevulinate from L-glutamyl-tRNA(Glu): step 2/2. This chain is Glutamate-1-semialdehyde 2,1-aminomutase, found in Chlamydia muridarum (strain MoPn / Nigg).